The chain runs to 371 residues: Chaperone protein DnaJ (371 aa).

The 65-residue stretch at 4–68 (DYYKILGVSK…QKRAAYDRFG (65 aa)) folds into the J domain. The CR-type zinc-finger motif lies at 134–212 (GIEKNISFSS…CHGMGRCHKQ (79 aa)). C147, C150, C164, C167, C186, C189, C200, and C203 together coordinate Zn(2+). CXXCXGXG motif repeat units lie at residues 147–154 (CDTCHGSG), 164–171 (CDACGGVG), 186–193 (CHKCKGNG), and 200–207 (CKKCHGMG).

It belongs to the DnaJ family. As to quaternary structure, homodimer. It depends on Zn(2+) as a cofactor.

The protein localises to the cytoplasm. In terms of biological role, participates actively in the response to hyperosmotic and heat shock by preventing the aggregation of stress-denatured proteins and by disaggregating proteins, also in an autonomous, DnaK-independent fashion. Unfolded proteins bind initially to DnaJ; upon interaction with the DnaJ-bound protein, DnaK hydrolyzes its bound ATP, resulting in the formation of a stable complex. GrpE releases ADP from DnaK; ATP binding to DnaK triggers the release of the substrate protein, thus completing the reaction cycle. Several rounds of ATP-dependent interactions between DnaJ, DnaK and GrpE are required for fully efficient folding. Also involved, together with DnaK and GrpE, in the DNA replication of plasmids through activation of initiation proteins. This chain is Chaperone protein DnaJ, found in Rickettsia akari (strain Hartford).